A 252-amino-acid chain; its full sequence is 3-dehydroquinate dehydratase (252 aa).

Residues serine 21, 46-48 (EWR), and arginine 82 each bind 3-dehydroquinate. Histidine 143 (proton donor/acceptor) is an active-site residue. Catalysis depends on lysine 170, which acts as the Schiff-base intermediate with substrate. 3-dehydroquinate contacts are provided by arginine 213, serine 232, and glutamine 236.

Belongs to the type-I 3-dehydroquinase family. Homodimer.

The catalysed reaction is 3-dehydroquinate = 3-dehydroshikimate + H2O. Its pathway is metabolic intermediate biosynthesis; chorismate biosynthesis; chorismate from D-erythrose 4-phosphate and phosphoenolpyruvate: step 3/7. Involved in the third step of the chorismate pathway, which leads to the biosynthesis of aromatic amino acids. Catalyzes the cis-dehydration of 3-dehydroquinate (DHQ) and introduces the first double bond of the aromatic ring to yield 3-dehydroshikimate. In Shigella boydii serotype 4 (strain Sb227), this protein is 3-dehydroquinate dehydratase.